The following is a 274-amino-acid chain: 4-diphosphocytidyl-2-C-methyl-D-erythritol kinase (274 aa).

Lysine 10 is a catalytic residue. Residue 101 to 111 (PTQAGLGGGSA) coordinates ATP. Residue aspartate 143 is part of the active site.

This sequence belongs to the GHMP kinase family. IspE subfamily.

The enzyme catalyses 4-CDP-2-C-methyl-D-erythritol + ATP = 4-CDP-2-C-methyl-D-erythritol 2-phosphate + ADP + H(+). It participates in isoprenoid biosynthesis; isopentenyl diphosphate biosynthesis via DXP pathway; isopentenyl diphosphate from 1-deoxy-D-xylulose 5-phosphate: step 3/6. Functionally, catalyzes the phosphorylation of the position 2 hydroxy group of 4-diphosphocytidyl-2C-methyl-D-erythritol. The sequence is that of 4-diphosphocytidyl-2-C-methyl-D-erythritol kinase from Helicobacter pylori (strain HPAG1).